The chain runs to 314 residues: Methionyl-tRNA formyltransferase (314 aa).

A (6S)-5,6,7,8-tetrahydrofolate-binding site is contributed by 109–112 (SVLP).

This sequence belongs to the Fmt family.

The enzyme catalyses L-methionyl-tRNA(fMet) + (6R)-10-formyltetrahydrofolate = N-formyl-L-methionyl-tRNA(fMet) + (6S)-5,6,7,8-tetrahydrofolate + H(+). In terms of biological role, attaches a formyl group to the free amino group of methionyl-tRNA(fMet). The formyl group appears to play a dual role in the initiator identity of N-formylmethionyl-tRNA by promoting its recognition by IF2 and preventing the misappropriation of this tRNA by the elongation apparatus. The chain is Methionyl-tRNA formyltransferase from Dictyoglomus turgidum (strain DSM 6724 / Z-1310).